Reading from the N-terminus, the 305-residue chain is Probable alpha-L-glutamate ligase (305 aa).

Residues 119–301 (LQVLAAQHIP…IAGLIIDYLL (183 aa)) enclose the ATP-grasp domain. Residues Lys-155, 192–193 (DF), Asp-201, and 225–227 (RAN) contribute to the ATP site. Mg(2+) contacts are provided by Asp-262, Glu-274, and Asn-276. Asp-262, Glu-274, and Asn-276 together coordinate Mn(2+).

It belongs to the RimK family. Mg(2+) is required as a cofactor. Mn(2+) serves as cofactor.

This is Probable alpha-L-glutamate ligase from Haemophilus ducreyi (strain 35000HP / ATCC 700724).